A 134-amino-acid polypeptide reads, in one-letter code: ATP synthase epsilon chain (134 aa).

Belongs to the ATPase epsilon chain family. F-type ATPases have 2 components, CF(1) - the catalytic core - and CF(0) - the membrane proton channel. CF(1) has five subunits: alpha(3), beta(3), gamma(1), delta(1), epsilon(1). CF(0) has three main subunits: a, b and c.

The protein resides in the cell inner membrane. Its function is as follows. Produces ATP from ADP in the presence of a proton gradient across the membrane. This chain is ATP synthase epsilon chain, found in Nitratidesulfovibrio vulgaris (strain DSM 19637 / Miyazaki F) (Desulfovibrio vulgaris).